Reading from the N-terminus, the 881-residue chain is DNA replication helicase (881 aa).

The segment at 1–32 (MESADILPGSRGTVDRRCEGSEEKITPPRPVE) is disordered. Residues 13–32 (TVDRRCEGSEEKITPPRPVE) show a composition bias toward basic and acidic residues. 105-112 (GNAGSGKS) contacts ATP.

The protein belongs to the herpesviridae helicase family. As to quaternary structure, associates with the primase and the primase-associated factor to form the helicase-primase complex.

Its subcellular location is the host nucleus. Component of the helicase/primase complex. Unwinds the DNA at the replication forks and generates single-stranded DNA for both leading and lagging strand synthesis. The primase synthesizes short RNA primers on the lagging strand that the polymerase elongates using dNTPs. Possesses helicase-like motifs and therefore may act as the helicase subunit of the complex. In Equus caballus (Horse), this protein is DNA replication helicase.